The sequence spans 299 residues: Bifunctional protein FolD (299 aa).

NADP(+) contacts are provided by residues 168 to 170, serine 193, and isoleucine 234; that span reads GRS.

This sequence belongs to the tetrahydrofolate dehydrogenase/cyclohydrolase family. Homodimer.

It catalyses the reaction (6R)-5,10-methylene-5,6,7,8-tetrahydrofolate + NADP(+) = (6R)-5,10-methenyltetrahydrofolate + NADPH. It carries out the reaction (6R)-5,10-methenyltetrahydrofolate + H2O = (6R)-10-formyltetrahydrofolate + H(+). It functions in the pathway one-carbon metabolism; tetrahydrofolate interconversion. Catalyzes the oxidation of 5,10-methylenetetrahydrofolate to 5,10-methenyltetrahydrofolate and then the hydrolysis of 5,10-methenyltetrahydrofolate to 10-formyltetrahydrofolate. In Brucella abortus (strain S19), this protein is Bifunctional protein FolD.